Reading from the N-terminus, the 1151-residue chain is Elicitor of plant defense protein 1 (1151 aa).

3 disordered regions span residues 22–130, 178–197, and 236–255; these read YQDP…TLGE, ERIR…RSIK, and NYNS…DMHP. Acidic residues predominate over residues 39-49; it reads IIEDGEPEDEW. Over residues 64 to 99 the composition is skewed to polar residues; sequence QNSASRLSKMSLTERFSIQTLDDTDGNTKSNRSSAT. Residues 104-122 are compositionally biased toward low complexity; sequence NPPDFSNGNDDSNGNSQNP. The span at 178 to 187 shows a compositional bias: basic and acidic residues; that stretch reads ERIRAEESDS. One can recognise a uDENN domain in the interval 242–500; that stretch reads PPPEPLNTDP…NLCTEAFNPL (259 aa). Residues 524-656 enclose the cDENN domain; it reads EIPGSRTIDI…ARRKLMSLLQ (133 aa). A dDENN domain is found at 658-1019; that stretch reads AAPHKLRYGV…DREMQPANDA (362 aa). 2 stretches are compositionally biased toward polar residues: residues 695-711 and 744-760; these read STPK…SSSG and TSKS…SPVS. Residues 695-809 are disordered; sequence STPKSTLGKW…SSSFGVDKHP (115 aa). Residues 784-798 show a composition bias toward basic and acidic residues; sequence LREKRSGHFGEEKMR. The Phorbol-ester/DAG-type zinc finger occupies 886-934; it reads GHCFNYMPKDNTSMCTICNDLAEGDGVYRCTGCKIVSHGRCLGYCSLIC.

Belongs to the EPD1 elicitor family.

The protein localises to the secreted. It is found in the host cell. Functionally, acts as an elicitor that triggers cell death and defense responses in the host plants. The protein is Elicitor of plant defense protein 1 of Gibberella zeae (strain ATCC MYA-4620 / CBS 123657 / FGSC 9075 / NRRL 31084 / PH-1) (Wheat head blight fungus).